The primary structure comprises 478 residues: Muscarinic acetylcholine receptor M4 (478 aa).

The Extracellular segment spans residues 1–30; the sequence is MXNFTPVNGSSANQSVRLVTAAHNHLETVE. Residues Asn8 and Asn13 are each glycosylated (N-linked (GlcNAc...) asparagine). The helical transmembrane segment at 31 to 53 threads the bilayer; sequence MVFIATVTGSLSLVTVVGNILVM. Residues 54 to 67 are Cytoplasmic-facing; it reads LSIKVNRQLQTVNN. The helical transmembrane segment at 68 to 88 threads the bilayer; the sequence is YFLFSLGCADLIIGAFSMNLY. At 89–105 the chain is on the extracellular side; that stretch reads TLYIIKGYWPLGAVVCD. A disulfide bridge connects residues Cys104 and Cys184. The chain crosses the membrane as a helical span at residues 106 to 127; it reads LWLALDYVVSNASVMNLLIISF. Over 128 to 147 the chain is Cytoplasmic; it reads DRYFCVTKPLTYPARRTTKM. A helical transmembrane segment spans residues 148–170; the sequence is AGLMIAAAWVLSFVLWAPAILFW. Over 171-192 the chain is Extracellular; sequence QFVVGKRTVPDNQCFIQFLSNP. The helical transmembrane segment at 193–215 threads the bilayer; that stretch reads AVTFGTAIAAFYLPVVIMTVLYI. Residues 216–400 lie on the Cytoplasmic side of the membrane; it reads HISLASRSRV…AARERKVTRT (185 aa). A disordered region spans residues 271–333; that stretch reads LEEAPPPALP…APTLQPRTLN (63 aa). Positions 274–285 are enriched in pro residues; the sequence is APPPALPPPPRP. Positions 293–303 are enriched in polar residues; it reads NESSSGSATQN. Residues 310 to 332 are compositionally biased toward low complexity; the sequence is TELSTAEATTPALPAPTLQPRTL. Residues 401–421 traverse the membrane as a helical segment; sequence IFAILLAFILTWTPYNVMVLV. The Extracellular segment spans residues 422–435; sequence NTFCQSCIPERVWS. A helical transmembrane segment spans residues 436 to 455; it reads IGYWLCYVNSTINPACYALC. The Cytoplasmic portion of the chain corresponds to 456 to 478; the sequence is NATFKKTFRHLLLCQYRNIGTAR. Phosphothreonine occurs at positions 458, 462, and 476.

This sequence belongs to the G-protein coupled receptor 1 family. Muscarinic acetylcholine receptor subfamily. CHRM4 sub-subfamily.

Its subcellular location is the cell membrane. It localises to the postsynaptic cell membrane. Its function is as follows. The muscarinic acetylcholine receptor mediates various cellular responses, including inhibition of adenylate cyclase, breakdown of phosphoinositides and modulation of potassium channels through the action of G proteins. Primary transducing effect is inhibition of adenylate cyclase. The protein is Muscarinic acetylcholine receptor M4 (Chrm4) of Rattus norvegicus (Rat).